A 461-amino-acid polypeptide reads, in one-letter code: Cysteine--tRNA ligase (461 aa).

Cys-28 is a binding site for Zn(2+). Positions 30-40 (ITIYDLCHIGH) match the 'HIGH' region motif. Residues Cys-209, His-234, and Glu-238 each coordinate Zn(2+). A 'KMSKS' region motif is present at residues 266–270 (KMSKS). Position 269 (Lys-269) interacts with ATP.

This sequence belongs to the class-I aminoacyl-tRNA synthetase family. In terms of assembly, monomer. It depends on Zn(2+) as a cofactor.

It is found in the cytoplasm. The catalysed reaction is tRNA(Cys) + L-cysteine + ATP = L-cysteinyl-tRNA(Cys) + AMP + diphosphate. In Yersinia pseudotuberculosis serotype O:3 (strain YPIII), this protein is Cysteine--tRNA ligase.